We begin with the raw amino-acid sequence, 65 residues long: Large ribosomal subunit protein bL35 (65 aa).

The disordered stretch occupies residues 1 to 22 (MPKIKTVRGAAKRFKKTGSGGF). Positions 10 to 22 (AAKRFKKTGSGGF) are enriched in basic residues.

Belongs to the bacterial ribosomal protein bL35 family.

The sequence is that of Large ribosomal subunit protein bL35 from Serratia proteamaculans (strain 568).